A 615-amino-acid chain; its full sequence is MAERALEPEAEAEAEAGAGGEAAAEEGAAGRKARGRPRLTESDRARRRLESRKKYDVRRVYLGEAHGPWVDLRRRSGWSDAKLAAYLISLERGQRSGRHGKPWEQVPKKPKRKKRRRRNVNCLKNVVIWYEDHKHRCPYEPHLAELDPTFGLYTTAVWQCEAGHRYFQDLHSPLKPLSDSDPDSDKVGNGLVAGSSDSSSSGSASDSEESPEGQPVKAAAAAAAATPTSPVGSSGLITQEGVHIPFDVHHVESLAEQGTPLCSNPAGNGPEALETVVCVPVPVQVGAGPSALFENVPQEALGEVVASCPMPGMVPGSQVIIIAGPGYDALTAEGIHLNMAAGSGVPGSGLGEEVPCAMMEGVAAYTQTEPEGSQPSTMDATAVAGIETKKEKEDLCLLKKEEKEEPVAPELATTVPESAEPEAEADGEELDGSDMSAIIYEIPKEPEKRRRSKRSRVMDADGLLEMFHCPYEGCSQVYVALSSFQNHVNLVHRKGKTKVCPHPGCGKKFYLSNHLRRHMIIHSGVREFTCETCGKSFKRKNHLEVHRRTHTGETPLQCEICGYQCRQRASLNWHMKKHTAEVQYNFTCDRCGKRFEKLDSVKFHTLKSHPDHKPT.

Disordered regions lie at residues 1-48, 95-117, 176-236, and 401-432; these read MAER…ARRR, RSGRHGKPWEQVPKKPKRKKRRR, PLSD…SSGL, and EEKEEPVAPELATTVPESAEPEAEADGEELDG. The Nuclear localization signal motif lies at 107-118; that stretch reads PKKPKRKKRRRR. Positions 108 to 117 are enriched in basic residues; the sequence is KKPKRKKRRR. Over residues 193–205 the composition is skewed to low complexity; sequence AGSSDSSSSGSAS. Residues 226 to 236 show a composition bias toward polar residues; sequence TPTSPVGSSGL. Over residues 419–432 the composition is skewed to acidic residues; it reads AEPEAEADGEELDG. The Nuclear localization signal signature appears at 445–451; that stretch reads EPEKRRR. 5 consecutive C2H2-type zinc fingers follow at residues 467–492, 498–522, 528–550, 556–578, and 586–609; these read FHCPYEGCSQVYVALSSFQNHVNLVH, KVCPHPGCGKKFYLSNHLRRHMIIH, FTCETCGKSFKRKNHLEVHRRTH, LQCEICGYQCRQRASLNWHMKKH, and FTCDRCGKRFEKLDSVKFHTLKSH.

It belongs to the krueppel C2H2-type zinc-finger protein family. In terms of assembly, interacts with NR5A1. As to expression, highly expressed in testis, cerebellum, temporal lobe, hippocampus and the adrenal gland. Moderately expressed in spleen, uterus, thymus, pancreas, kidney, stomach and rectum.

It localises to the nucleus. Its function is as follows. Transcriptional repressor. May repress NR5A1, PPARG, NR1H3, NR4A2, ESR1 and NR3C1 transcriptional activity. The polypeptide is Zinc finger protein 653 (ZNF653) (Homo sapiens (Human)).